Consider the following 242-residue polypeptide: Protein GrpE (242 aa).

Disordered regions lie at residues 1-75 (MSDD…DDEL) and 93-136 (VADL…QQIK). The segment covering 23–37 (DAESSAAEDASAADD) has biased composition (low complexity). The segment covering 38 to 49 (AAPEESTGDEQA) has biased composition (acidic residues). Over residues 50 to 64 (GETTAESSDAESVTV) the composition is skewed to polar residues. The segment covering 96–108 (LETERDEAEETAS) has biased composition (acidic residues). The segment covering 124–133 (YKKRAKKRQQ) has biased composition (basic residues).

It belongs to the GrpE family. In terms of assembly, homodimer.

The protein localises to the cytoplasm. Functionally, participates actively in the response to hyperosmotic and heat shock by preventing the aggregation of stress-denatured proteins, in association with DnaK and GrpE. It is the nucleotide exchange factor for DnaK and may function as a thermosensor. Unfolded proteins bind initially to DnaJ; upon interaction with the DnaJ-bound protein, DnaK hydrolyzes its bound ATP, resulting in the formation of a stable complex. GrpE releases ADP from DnaK; ATP binding to DnaK triggers the release of the substrate protein, thus completing the reaction cycle. Several rounds of ATP-dependent interactions between DnaJ, DnaK and GrpE are required for fully efficient folding. In Haloferax mediterranei (strain ATCC 33500 / DSM 1411 / JCM 8866 / NBRC 14739 / NCIMB 2177 / R-4) (Halobacterium mediterranei), this protein is Protein GrpE.